We begin with the raw amino-acid sequence, 244 residues long: Orotidine 5'-phosphate decarboxylase (244 aa).

Substrate is bound by residues Asp10, Lys32, 59-68 (DLKLHDIPNT), Thr122, Arg184, Gln193, Gly213, and Arg214. Lys61 (proton donor) is an active-site residue.

This sequence belongs to the OMP decarboxylase family. Type 1 subfamily. Homodimer.

It carries out the reaction orotidine 5'-phosphate + H(+) = UMP + CO2. The protein operates within pyrimidine metabolism; UMP biosynthesis via de novo pathway; UMP from orotate: step 2/2. Catalyzes the decarboxylation of orotidine 5'-monophosphate (OMP) to uridine 5'-monophosphate (UMP). This chain is Orotidine 5'-phosphate decarboxylase, found in Bacillus caldolyticus.